Consider the following 293-residue polypeptide: Cep170-like protein (293 aa).

Disordered regions lie at residues 78-110 and 217-270; these read PPLV…LTIT and FPSA…AESE. Positions 227–245 are enriched in polar residues; it reads KQKSSPVNNHHSPGQTPTL.

This sequence belongs to the CEP170 family.

This Homo sapiens (Human) protein is Cep170-like protein (CEP170P1).